A 251-amino-acid chain; its full sequence is Imidazole glycerol phosphate synthase subunit HisF (251 aa).

Residues aspartate 11 and aspartate 130 contribute to the active site.

The protein belongs to the HisA/HisF family. As to quaternary structure, heterodimer of HisH and HisF.

The protein localises to the cytoplasm. It catalyses the reaction 5-[(5-phospho-1-deoxy-D-ribulos-1-ylimino)methylamino]-1-(5-phospho-beta-D-ribosyl)imidazole-4-carboxamide + L-glutamine = D-erythro-1-(imidazol-4-yl)glycerol 3-phosphate + 5-amino-1-(5-phospho-beta-D-ribosyl)imidazole-4-carboxamide + L-glutamate + H(+). It functions in the pathway amino-acid biosynthesis; L-histidine biosynthesis; L-histidine from 5-phospho-alpha-D-ribose 1-diphosphate: step 5/9. In terms of biological role, IGPS catalyzes the conversion of PRFAR and glutamine to IGP, AICAR and glutamate. The HisF subunit catalyzes the cyclization activity that produces IGP and AICAR from PRFAR using the ammonia provided by the HisH subunit. In Chlorobium phaeobacteroides (strain BS1), this protein is Imidazole glycerol phosphate synthase subunit HisF.